The following is a 207-amino-acid chain: MKFKDKLKFYVITDNNYSNEVVSVEEALKGGASSIQLRMKNSTTREMIEVGNELRKLTLEYDALFFVNDRLDVAQVVNADGIHVGIDDMPVSKIKEIAPNLIIGASAYNMEEMKTAESEGADYLGVGAVYSTNTKLDARNLGIDGLKSISKLSKLPIVAIGGINHSNVQNVLECGVSGVAVVSAIVGAENILKSAENMNELIKKYIK.

Residues 36-40 and Asn-68 contribute to the 4-amino-2-methyl-5-(diphosphooxymethyl)pyrimidine site; that span reads QLRMK. The Mg(2+) site is built by Asp-69 and Asp-88. A 4-amino-2-methyl-5-(diphosphooxymethyl)pyrimidine-binding site is contributed by Ser-106. 132-134 provides a ligand contact to 2-[(2R,5Z)-2-carboxy-4-methylthiazol-5(2H)-ylidene]ethyl phosphate; it reads TNT. Lys-135 serves as a coordination point for 4-amino-2-methyl-5-(diphosphooxymethyl)pyrimidine. Residues Gly-162 and 182-183 contribute to the 2-[(2R,5Z)-2-carboxy-4-methylthiazol-5(2H)-ylidene]ethyl phosphate site; that span reads VS.

The protein belongs to the thiamine-phosphate synthase family. Requires Mg(2+) as cofactor.

The enzyme catalyses 2-[(2R,5Z)-2-carboxy-4-methylthiazol-5(2H)-ylidene]ethyl phosphate + 4-amino-2-methyl-5-(diphosphooxymethyl)pyrimidine + 2 H(+) = thiamine phosphate + CO2 + diphosphate. It carries out the reaction 2-(2-carboxy-4-methylthiazol-5-yl)ethyl phosphate + 4-amino-2-methyl-5-(diphosphooxymethyl)pyrimidine + 2 H(+) = thiamine phosphate + CO2 + diphosphate. The catalysed reaction is 4-methyl-5-(2-phosphooxyethyl)-thiazole + 4-amino-2-methyl-5-(diphosphooxymethyl)pyrimidine + H(+) = thiamine phosphate + diphosphate. Its pathway is cofactor biosynthesis; thiamine diphosphate biosynthesis; thiamine phosphate from 4-amino-2-methyl-5-diphosphomethylpyrimidine and 4-methyl-5-(2-phosphoethyl)-thiazole: step 1/1. In terms of biological role, condenses 4-methyl-5-(beta-hydroxyethyl)thiazole monophosphate (THZ-P) and 2-methyl-4-amino-5-hydroxymethyl pyrimidine pyrophosphate (HMP-PP) to form thiamine monophosphate (TMP). The polypeptide is Thiamine-phosphate synthase (Methanococcus maripaludis (strain C7 / ATCC BAA-1331)).